Consider the following 463-residue polypeptide: uncharacterized protein (463 aa).

Residues 13–81 enclose the HTH gntR-type domain; that stretch reads IPLYQQLYRY…PRSGWFADYH (69 aa). A DNA-binding region (H-T-H motif) is located at residues 41-60; sequence KRLLANQLSISQTTVERAYE. Lysine 308 bears the N6-(pyridoxal phosphate)lysine mark.

This sequence in the C-terminal section; belongs to the class-I pyridoxal-phosphate-dependent aminotransferase family. The cofactor is pyridoxal 5'-phosphate.

This is an uncharacterized protein from Bacillus subtilis (strain 168).